A 239-amino-acid chain; its full sequence is Phosphoribosylaminoimidazole-succinocarboxamide synthase (239 aa).

Belongs to the SAICAR synthetase family.

It catalyses the reaction 5-amino-1-(5-phospho-D-ribosyl)imidazole-4-carboxylate + L-aspartate + ATP = (2S)-2-[5-amino-1-(5-phospho-beta-D-ribosyl)imidazole-4-carboxamido]succinate + ADP + phosphate + 2 H(+). Its pathway is purine metabolism; IMP biosynthesis via de novo pathway; 5-amino-1-(5-phospho-D-ribosyl)imidazole-4-carboxamide from 5-amino-1-(5-phospho-D-ribosyl)imidazole-4-carboxylate: step 1/2. The sequence is that of Phosphoribosylaminoimidazole-succinocarboxamide synthase from Bacillus mycoides (strain KBAB4) (Bacillus weihenstephanensis).